The following is a 517-amino-acid chain: Serine carboxypeptidase ctsa-3.2 (517 aa).

Positions 1-21 (MWWTSLVFSVLLFDLIFISNC) are cleaved as a signal peptide. Ser172 is an active-site residue. N-linked (GlcNAc...) asparagine glycosylation is present at Asn269. Catalysis depends on residues Asp418 and His485.

This sequence belongs to the peptidase S10 family.

The protein is Serine carboxypeptidase ctsa-3.2 of Caenorhabditis elegans.